The primary structure comprises 381 residues: Chymosin (381 aa).

A signal peptide spans 1-16; it reads MRGFVVLLAVFALSQA. The propeptide at 17-58 is activation peptide; sequence SGIVRIPLHKGKSLRRALKERGLLEDFLKNHQHAVSRKHSNS. In terms of domain architecture, Peptidase A1 spans 74-378; sequence YFGKIYIGTP…DRASNLVGLA (305 aa). Residue Asp92 is part of the active site. Copy 1 of the repeat occupies 92-102; that stretch reads DTGSSDLWVPS. 2 disulfides stabilise this stretch: Cys105/Cys110 and Cys265/Cys269. The active site involves Asp274. Repeat 2 spans residues 274–284; that stretch reads DTGTSMLVGPG. An intrachain disulfide couples Cys308 to Cys341.

The protein belongs to the peptidase A1 family. Monomer.

It catalyses the reaction Broad specificity similar to that of pepsin A. Clots milk by cleavage of a single 104-Ser-Phe-|-Met-Ala-107 bond in kappa-chain of casein.. With respect to regulation, inhibited by pepstatin. Hydrolyzes a variety of proteins. The protein is Chymosin (CYM) of Callithrix jacchus (White-tufted-ear marmoset).